Reading from the N-terminus, the 751-residue chain is Nibrin (751 aa).

An FHA domain is found at 24-83; the sequence is YVVGRKNCGILIENDQSISRNHAVLTVNFPVTSLSQTDEIPTLTIKDNSKYGTFVNEEKM. BRCT domains follow at residues 105-181 and 224-315; these read KFRV…SEFL and GKTF…LAVI. Residues 111-328 are mediates interaction with SP100; it reads EPLVVCSSCL…TENYCNPQGQ (218 aa). The interval 221–403 is interaction with MTOR, MAPKAP1 and RICTOR; that stretch reads IFKGKTFVFL…SRKLSQETFN (183 aa). A Phosphothreonine modification is found at Thr337. A Phosphoserine; by ATM modification is found at Ser343. Phosphoserine is present on residues Ser347 and Ser398. The segment at 389 to 418 is disordered; the sequence is GLEQSSRKLSQETFNIKEAPKPSSKANNVA. Ser433 bears the Phosphoserine; by CDK2 mark. Lys436 participates in a covalent cross-link: Glycyl lysine isopeptide (Lys-Gly) (interchain with G-Cter in ubiquitin). Disordered stretches follow at residues 444–479 and 491–550; these read KDWTSQQQQNSIKNYFQPCTRKRERDEDNPELSSCK and EQTQ…RKRK. A compositionally biased stretch (polar residues) spans 446–457; it reads WTSQQQQNSIKN. A Nuclear localization signal motif is present at residues 461-467; the sequence is PCTRKRE. 2 stretches are compositionally biased toward basic and acidic residues: residues 502–518 and 528–539; these read KSKEHQSQNATLDREAD and ELNRKSPDRKPL. Ser508 is subject to Phosphoserine. Residues Lys569 and Lys580 each participate in a glycyl lysine isopeptide (Lys-Gly) (interchain with G-Cter in SUMO2) cross-link. The segment at 576–645 is disordered; it reads VKVEKQEADD…ANSDGLQDSS (70 aa). Composition is skewed to basic and acidic residues over residues 577 to 599 and 615 to 636; these read KVEKQEADDTIRKKPRMDAERNR and EDEREKKDELQTESWSTKHEIA. Residues Lys684, Lys688, and Lys733 each participate in a glycyl lysine isopeptide (Lys-Gly) (interchain with G-Cter in ubiquitin) cross-link. The segment covering 731 to 742 has biased composition (basic and acidic residues); sequence QAKEESLADDLF. Residues 731–751 are disordered; the sequence is QAKEESLADDLFRYNPNVKRR. Positions 738 to 747 match the FxF/Y motif motif; the sequence is ADDLFRYNPN.

Belongs to the Nibrin family. In terms of assembly, component of the MRN complex composed of two heterodimers RAD50 and MRE11 associated with a single NBN. The MRN complexes dimerize on DNA to form joined MRN-MRN oligomers required for DNA double-strand break repair. As part of the MRN complex, interacts with MCM9; the interaction recruits the complex to DNA repair sites. Component of the BASC complex, at least composed of BRCA1, MSH2, MSH6, MLH1, ATM, BLM, RAD50, MRE11 and NBN. Interacts with histone H2AX; this requires phosphorylation of H2AX on 'Ser-139' and promotes NBN recruitment to DNA damage sites. Interacts with (phosphorylated) MDC1; promoting NBN recruitment to DNA damage sites. Interacts with (phosphorylated) RAD17; promoting NBN recruitment to DNA damage sites. Interacts (via FxF/Y motif) with ATM. Interacts with HJURP. Interacts with INTS3. Interacts with KPNA2. Interacts with TERF2; interaction is disrupted upon NBN phosphorylation by CDK2. Interacts with (phosphorylated) RBBP8/CtIP; the interaction links the role of the MRN complex in DNA double-strand break sensing to resection. Interacts with SP100; recruits NBN to PML bodies. Interacts with ATF2. Interacts with MTOR, MAPKAP1 isoform 2 and RICTOR; indicative for an association with the mTORC2 complex. Interacts with MRNIP. Interacts with UFL1; promoting UFL1 recruitment to double-strand breaks following DNA damage. Interacts with CYREN (via XLF motif). In terms of processing, ubiquitinated at Lys-436 via 'Lys-6'-linked ubiquitin chains by RNF8, promoting NBN recruitment to DNA double-strand breaks (DSBs). Ubiquitinated at Lys-684 and Lys-688 via 'Lys-63'-linked ubiquitin chains by PELI1: ubiquitination takes place following PELI1 phosphorylation and promotes ATM activation and DNA repair. Ubiquitinated at Lys-733 via 'Lys-63'-linked ubiquitin chains by the SCF(SKP2) complex: ubiquitination takes place following SKP2 phosphorylation and promotes ATM activation and DNA repair. Post-translationally, phosphorylated by ATM in response of ionizing radiation, and such phosphorylation is responsible intra-S phase checkpoint control and telomere maintenance. Phosphorylated at Ser-433 by CDK2 in S/G2 phases abolishes interaction with TERF2, enabling DCLRE1B/Apollo recruitment to telomeres. Phosphorylation at Ser-433 in response to dysfunctional telomeres promotes non-homologous end joining repair at telomeres, while dephosphorylation by PPP1CA promotes microhomology-mediated end-joining (MMEJ) repair. In terms of tissue distribution, high expression in the liver, heart and testis. Low expression in all other tissues analyzed. In the cerebellum the postmitotic Purkinje cells are marked specifically.

It is found in the nucleus. It localises to the chromosome. The protein resides in the PML body. Its subcellular location is the telomere. Component of the MRN complex, which plays a central role in double-strand break (DSB) repair, DNA recombination, maintenance of telomere integrity and meiosis. The MRN complex is involved in the repair of DNA double-strand breaks (DSBs) via homologous recombination (HR), an error-free mechanism which primarily occurs during S and G2 phases. The complex (1) mediates the end resection of damaged DNA, which generates proper single-stranded DNA, a key initial steps in HR, and is (2) required for the recruitment of other repair factors and efficient activation of ATM and ATR upon DNA damage. The MRN complex possesses single-strand endonuclease activity and double-strand-specific 3'-5' exonuclease activity, which are provided by MRE11, to initiate end resection, which is required for single-strand invasion and recombination. Within the MRN complex, NBN acts as a protein-protein adapter, which specifically recognizes and binds phosphorylated proteins, promoting their recruitment to DNA damage sites. Recruits MRE11 and RAD50 components of the MRN complex to DSBs in response to DNA damage. Promotes the recruitment of PI3/PI4-kinase family members ATM, ATR, and probably DNA-PKcs to the DNA damage sites, activating their functions. Mediates the recruitment of phosphorylated RBBP8/CtIP to DSBs, leading to cooperation between the MRN complex and RBBP8/CtIP to initiate end resection. RBBP8/CtIP specifically promotes the endonuclease activity of the MRN complex to clear DNA ends containing protein adducts. The MRN complex is also required for the processing of R-loops. NBN also functions in telomere length maintenance via its interaction with TERF2: interaction with TERF2 during G1 phase preventing recruitment of DCLRE1B/Apollo to telomeres. NBN also promotes DNA repair choice at dysfunctional telomeres: NBN phosphorylation by CDK2 promotes non-homologous end joining repair at telomeres, while unphosphorylated NBN promotes microhomology-mediated end-joining (MMEJ) repair. Enhances AKT1 phosphorylation possibly by association with the mTORC2 complex. The protein is Nibrin of Mus musculus (Mouse).